The following is a 335-amino-acid chain: tRNA N6-adenosine threonylcarbamoyltransferase (335 aa).

H111 and H115 together coordinate Fe cation. Substrate contacts are provided by residues L133–G137, D166, G179, and N276. Residue D301 coordinates Fe cation.

This sequence belongs to the KAE1 / TsaD family. It depends on Fe(2+) as a cofactor.

It is found in the cytoplasm. It catalyses the reaction L-threonylcarbamoyladenylate + adenosine(37) in tRNA = N(6)-L-threonylcarbamoyladenosine(37) in tRNA + AMP + H(+). Functionally, required for the formation of a threonylcarbamoyl group on adenosine at position 37 (t(6)A37) in tRNAs that read codons beginning with adenine. Is involved in the transfer of the threonylcarbamoyl moiety of threonylcarbamoyl-AMP (TC-AMP) to the N6 group of A37, together with TsaE and TsaB. TsaD likely plays a direct catalytic role in this reaction. The sequence is that of tRNA N6-adenosine threonylcarbamoyltransferase from Wolbachia sp. subsp. Drosophila simulans (strain wRi).